Here is a 268-residue protein sequence, read N- to C-terminus: Undecaprenyl-diphosphatase 1 (268 aa).

Helical transmembrane passes span 5-25, 43-63, 81-101, 107-127, 185-205, 214-234, and 248-268; these read TIVEALLLGLLEGLTEFIPVS, GKAFEILIQLGAILAILSVYF, HFVIGILIAFLPAAIIGALAH, VLFESPRLICTMLIIGGVILL, AEFSFFLAIPTMVGAFAFDLF, ADLPIIAIGFVAAFVTALFVV, and LFGWWRLVVGIVGLVALMIWG.

The protein belongs to the UppP family.

Its subcellular location is the cell inner membrane. It carries out the reaction di-trans,octa-cis-undecaprenyl diphosphate + H2O = di-trans,octa-cis-undecaprenyl phosphate + phosphate + H(+). Catalyzes the dephosphorylation of undecaprenyl diphosphate (UPP). Confers resistance to bacitracin. The polypeptide is Undecaprenyl-diphosphatase 1 (Mesorhizobium japonicum (strain LMG 29417 / CECT 9101 / MAFF 303099) (Mesorhizobium loti (strain MAFF 303099))).